A 32-amino-acid polypeptide reads, in one-letter code: Acatoxin 1 (32 aa).

3 cysteine pairs are disulfide-bonded: Cys-1–Cys-15, Cys-8–Cys-20, and Cys-14–Cys-26.

It localises to the secreted. It is found in the nematocyst. Reversibly inhibits acid-sensing ion channels (ASIC) in rat dorsal root ganglia neurons. Reversibly inhibits voltage-gated potassium channels (Kv) in rat DRG neurons. This chain is Acatoxin 1, found in Anthopleura cascaia (Sea anemone).